We begin with the raw amino-acid sequence, 250 residues long: MRRVLVAGNWKMHKTPSEARVWFAELKRLLPPLQSEAAVLPAFPILPVAKEVLAETQVGYGAQDVSAHKEGAYTGEVSARMLSDLGCRYAIVGHSERRRYHGETDALVAEKAKRLLEEGITPILCVGEPLEVREKGEAVPYTLRQLRGSLEGVEPPGPEALVIAYEPVWAIGTGKNATPEDAEAMHQAIRKALSERYGEAFASRVRILYGGSVNPKNFADLLSMPNVDGGLVGGASLELESFLALLRIAG.

9–11 is a substrate binding site; the sequence is NWK. The active-site Electrophile is His94. Glu166 (proton acceptor) is an active-site residue. Residues Gly172, Ser212, and 233-234 contribute to the substrate site; that span reads GG.

Belongs to the triosephosphate isomerase family. Homodimer.

It localises to the cytoplasm. The enzyme catalyses D-glyceraldehyde 3-phosphate = dihydroxyacetone phosphate. It functions in the pathway carbohydrate biosynthesis; gluconeogenesis. It participates in carbohydrate degradation; glycolysis; D-glyceraldehyde 3-phosphate from glycerone phosphate: step 1/1. In terms of biological role, involved in the gluconeogenesis. Catalyzes stereospecifically the conversion of dihydroxyacetone phosphate (DHAP) to D-glyceraldehyde-3-phosphate (G3P). The protein is Triosephosphate isomerase of Thermus thermophilus (strain ATCC 27634 / DSM 579 / HB8).